The primary structure comprises 427 residues: Trigger factor (427 aa).

The PPIase FKBP-type domain occupies 163–248 (GDTVVIDFVG…IHEVKEKEVP (86 aa)).

Belongs to the FKBP-type PPIase family. Tig subfamily.

The protein localises to the cytoplasm. It carries out the reaction [protein]-peptidylproline (omega=180) = [protein]-peptidylproline (omega=0). In terms of biological role, involved in protein export. Acts as a chaperone by maintaining the newly synthesized protein in an open conformation. Functions as a peptidyl-prolyl cis-trans isomerase. In Streptococcus sanguinis (strain SK36), this protein is Trigger factor.